Reading from the N-terminus, the 1738-residue chain is Interaptin (1738 aa).

An actin-binding region spans residues 1-248 (MEHSTPLNEE…TYISLFPKVY (248 aa)). Over 1–1705 (MEHSTPLNEE…RIFPSKNTRP (1705 aa)) the chain is Cytoplasmic. 2 Calponin-homology (CH) domains span residues 22–128 (IAQK…LRYQ) and 146–249 (TKPS…KVYQ). 3 disordered regions span residues 285 to 350 (SKST…SNLS), 1068 to 1090 (IQQLQSQLNEQRQQQSNQLSEKD), and 1589 to 1627 (LQQQKQQQQQPPTASSSPSSSPSLLSSTPTPKPQRPNQI). A compositionally biased stretch (low complexity) spans 292-301 (QQNQQQQQQN). Positions 302–316 (LLSPNSYRNSISFSK) are enriched in polar residues. 3 stretches are compositionally biased toward low complexity: residues 317–344 (SPSFEGSQSTGSSRSISPISSPIKNSTT), 1068–1086 (IQQLQSQLNEQRQQQSNQL), and 1589–1617 (LQQQKQQQQQPPTASSSPSSSPSLLSSTP). Residues 373–1598 (EESRVIEKIV…LQQQKQQQQQ (1226 aa)) adopt a coiled-coil conformation. The chain crosses the membrane as a helical; Anchor for type IV membrane protein span at residues 1706–1726 (IFDWRALFFIGAAVLAISTLF).

The protein belongs to the alpha-actinin family.

The protein localises to the nucleus membrane. It localises to the endoplasmic reticulum membrane. The protein resides in the golgi apparatus. It is found in the golgi stack membrane. Its subcellular location is the cytoplasm. The protein localises to the cytoskeleton. It localises to the microtubule organizing center. The protein resides in the centrosome. In terms of biological role, may function as linker between cellular membranes and the actin cytoskeleton. Required for normal development of fruiting bodies. This Dictyostelium discoideum (Social amoeba) protein is Interaptin (abpD).